The primary structure comprises 375 residues: Succinyl-diaminopimelate desuccinylase (375 aa).

His-66 is a Zn(2+) binding site. Asp-68 is a catalytic residue. Asp-99 lines the Zn(2+) pocket. The Proton acceptor role is filled by Glu-133. Positions 134, 162, and 348 each coordinate Zn(2+).

It belongs to the peptidase M20A family. DapE subfamily. Homodimer. Zn(2+) is required as a cofactor. Co(2+) serves as cofactor.

The catalysed reaction is N-succinyl-(2S,6S)-2,6-diaminopimelate + H2O = (2S,6S)-2,6-diaminopimelate + succinate. It participates in amino-acid biosynthesis; L-lysine biosynthesis via DAP pathway; LL-2,6-diaminopimelate from (S)-tetrahydrodipicolinate (succinylase route): step 3/3. Catalyzes the hydrolysis of N-succinyl-L,L-diaminopimelic acid (SDAP), forming succinate and LL-2,6-diaminopimelate (DAP), an intermediate involved in the bacterial biosynthesis of lysine and meso-diaminopimelic acid, an essential component of bacterial cell walls. In Enterobacter sp. (strain 638), this protein is Succinyl-diaminopimelate desuccinylase.